The sequence spans 343 residues: MERVRDVSELPKAHLHLHFTGSMRPTTLLELADKHGVRLPETLTEALGRGESPKLRATDERGWFRFQRLYDAARSCLQTPEDIQRLVREAAEEDLRDGSGWLEIQVDPTSYAPRLGGLIPALEIILDAVETTVRDTGIGMRVLVAANRMKHPLDARTLARLAVRYAERGVVGFGLSNDERRGMARDFDRAFAIARDGGLLSAPHGGELTGPASVRDCLDDLEADRIGHGVRAAEDPRLLKRLADRQVTCEVCPASNVALGVYEKPEDVPLRRLFEAGVPMALGADDPLLFGSRLAAQYEIAREHHGFTDAELAELARQSVRGSAAPEEVKGKLLAGVDDWLVA.

Positions 16, 18, and 204 each coordinate Zn(2+). His-18 is a binding site for substrate. Residue Glu-207 is the Proton donor of the active site. A Zn(2+)-binding site is contributed by Asp-285. A substrate-binding site is contributed by Asp-286.

It belongs to the metallo-dependent hydrolases superfamily. Adenosine and AMP deaminases family. Requires Zn(2+) as cofactor.

In terms of biological role, putative nucleoside deaminase. May catalyze the hydrolytic deamination of adenosine or some similar substrate and play a role in purine metabolism. The sequence is that of Putative adenosine/adenine deaminase from Streptomyces coelicolor (strain ATCC BAA-471 / A3(2) / M145).